A 184-amino-acid chain; its full sequence is MSVDFSSERVCYVHCSFCTTILAVSVPYASLFTLVTVRCGHCTNLLSLNIGVSLHQTSAPPIHQDLQPHRQHTTSLVTRKDCASSSRSTNNLSENIDREAPRMPPIRPPEKRQRVPSAYNRFIKEEIQRIKACNPEISHREAFSTAAKNWAHFPHIHFGLKLDGNKKGKQLDQSVAGQKSNGYY.

The segment at 15-42 (CSFCTTILAVSVPYASLFTLVTVRCGHC) adopts a C4-type zinc-finger fold. Composition is skewed to polar residues over residues 76-94 (LVTR…NLSE) and 171-184 (LDQS…NGYY). 2 disordered regions span residues 76–115 (LVTR…RQRV) and 162–184 (LDGN…NGYY).

It belongs to the YABBY family. Interacts with SPL/NZZ and SPEAR2. As to expression, expressed at low levels in abaxial regions of lateral aerial organ primordia leading to cotyledons, leaves, flower meristems, sepals, petals, stamen and carpels, but not in roots.

It localises to the nucleus. Its function is as follows. Involved in the abaxial cell fate determination during embryogenesis and organogenesis. This chain is Putative axial regulator YABBY 2 (YAB2), found in Arabidopsis thaliana (Mouse-ear cress).